The sequence spans 272 residues: Acetylglutamate kinase (272 aa).

Residues 46–47, R68, and N166 contribute to the substrate site; that span reads GA.

It belongs to the acetylglutamate kinase family. ArgB subfamily.

The protein resides in the cytoplasm. It carries out the reaction N-acetyl-L-glutamate + ATP = N-acetyl-L-glutamyl 5-phosphate + ADP. Its pathway is amino-acid biosynthesis; L-arginine biosynthesis; N(2)-acetyl-L-ornithine from L-glutamate: step 2/4. In terms of biological role, catalyzes the ATP-dependent phosphorylation of N-acetyl-L-glutamate. The protein is Acetylglutamate kinase of Dehalococcoides mccartyi (strain ATCC BAA-2100 / JCM 16839 / KCTC 5957 / BAV1).